Consider the following 236-residue polypeptide: Small ribosomal subunit protein mS41 (236 aa).

Belongs to the mitochondrion-specific ribosomal protein mS41 family. Component of the mitochondrial small ribosomal subunit (mt-SSU). Mature N.crassa 74S mitochondrial ribosomes consist of a small (37S) and a large (54S) subunit. The 37S small subunit contains a 16S ribosomal RNA (16S mt-rRNA) and 32 different proteins. The 54S large subunit contains a 23S rRNA (23S mt-rRNA) and 42 different proteins.

The protein localises to the mitochondrion. Component of the mitochondrial ribosome (mitoribosome), a dedicated translation machinery responsible for the synthesis of mitochondrial genome-encoded proteins, including at least some of the essential transmembrane subunits of the mitochondrial respiratory chain. The mitoribosomes are attached to the mitochondrial inner membrane and translation products are cotranslationally integrated into the membrane. The chain is Small ribosomal subunit protein mS41 (fyv4) from Neurospora crassa (strain ATCC 24698 / 74-OR23-1A / CBS 708.71 / DSM 1257 / FGSC 987).